The chain runs to 38 residues: Large ribosomal subunit protein bL36 (38 aa).

The protein belongs to the bacterial ribosomal protein bL36 family.

In Phytoplasma australiense, this protein is Large ribosomal subunit protein bL36.